A 416-amino-acid polypeptide reads, in one-letter code: MATTASLHLHLHLLLSSSRRRCRLLVPRAHTDSISTGRRRFIADTATASAAAAVGPLVLPRTPLARADQPPSLSEWERVLLPIDPGVVLLDIAFVPDDPSHGFLLGTRQTILETKNGGNTWFPRSIPSAEDEDFNYRFNSVSFMGKEGWIIGKPAILLHTSDAGDSWERIPLSAQLPGNMVYIKATGEQSAEMVTDEGAIYVTSNRGYNWKAAVQETVSATLNRTVSSGISGASYYTGTFNTVNRSPDGRYVAVSSRGNFYLTWEPGQPFWQPHNRAVARRIQNMGWRADGGLWLLVRGGGLFLSKGSGFQFFYRGLNDAHAISYLHPPNQITEDFEEASVQSRGFGILDVGYRSKDEAWAAGGSGVLLKTTNGGKTWVRDKAADNIAANLYSVKFLGDNKGYVLGNDGVLLRYVG.

The transit peptide at 1-36 (MATTASLHLHLHLLLSSSRRRCRLLVPRAHTDSIST) directs the protein to the chloroplast. Residues 37-67 (GRRRFIADTATASAAAAVGPLVLPRTPLARA) constitute a thylakoid transit peptide.

Belongs to the Ycf48 family.

It is found in the plastid. Its subcellular location is the chloroplast thylakoid lumen. Its function is as follows. Essential for photosystem II (PSII) biogenesis; required for assembly of an early intermediate in PSII assembly that includes D2 (psbD) and cytochrome b559. This is Photosystem II stability/assembly factor HCF136, chloroplastic (HCF136) from Oryza sativa subsp. japonica (Rice).